Here is an 82-residue protein sequence, read N- to C-terminus: Small ribosomal subunit protein uS17 (82 aa).

It belongs to the universal ribosomal protein uS17 family. Part of the 30S ribosomal subunit.

Functionally, one of the primary rRNA binding proteins, it binds specifically to the 5'-end of 16S ribosomal RNA. This is Small ribosomal subunit protein uS17 from Shewanella amazonensis (strain ATCC BAA-1098 / SB2B).